Here is a 374-residue protein sequence, read N- to C-terminus: Probable quinol oxidase subunit 2 (374 aa).

A signal peptide spans 1–19 (MSKFKSLLLMFGTLILLSG). Residue C20 is the site of N-palmitoyl cysteine attachment. The S-diacylglycerol cysteine moiety is linked to residue C20. The next 2 membrane-spanning stretches (helical) occupy residues 43–63 (SIIFMLVIVAVVLTMFAIFIF) and 82–102 (IETIWFVVPIIIVIALSIPTV). Residues 321–374 (MKPMILGNNDPYDNEFKKEEDHNSKEMEKISKSAKDENASKFGSKADNDHGGGH) are disordered. Basic and acidic residues predominate over residues 334 to 374 (NEFKKEEDHNSKEMEKISKSAKDENASKFGSKADNDHGGGH).

This sequence belongs to the cytochrome c oxidase subunit 2 family.

The protein localises to the cell membrane. It carries out the reaction 2 a quinol + O2 = 2 a quinone + 2 H2O. Functionally, catalyzes quinol oxidation with the concomitant reduction of oxygen to water. Subunit II transfers the electrons from a quinol to the binuclear center of the catalytic subunit I. The sequence is that of Probable quinol oxidase subunit 2 (qoxA) from Staphylococcus haemolyticus (strain JCSC1435).